An 861-amino-acid polypeptide reads, in one-letter code: MARTVCGCSWALIFIIMSLLVKAKIDVCKRGDVTVQPSHVISLGSAVNISCSLKPRQGCLQVSSLNKLILYRFHRRIHFQRGHSLSSQVTGLPLGTTLFVCKLACSSKEEIRICGAEISVGVVPEQPQNVSCMQKGERGTVACSWDRGRDTHLYTAYTLQLNGPKNLTWQKQCSDYYCDSLDLGINLPPESPESSYTAQVTAINSLGTASSLPSTFTFLDVVRPLPPWDIRIKCVNASVSTCTLQWRDEGLVLLNRLRYRPVYSRSWNMVNATNAKGRHDLVDLKPFTEYEFQISSKPHLQKGRWSDWSESLRTQTPEKEPTGMLDVWYMKQHIDYKRQQISLFWKNLSLSEARGKILHYQVTLQEVAEGNATLQNITERNSWTWTIPRTGIWAAAVSAANSKGSSLPTRINIADLCGAGLLAPQQVSANPEGSDNLLVKWTSPGEGATAVQEYVVEWRELHLRGGMQPPLSWLRSPPYNTSTLISDNIKPYICYEIRVHALSGDQGGCSSIRGDLKHKAPLSGPHINAISEEKGSILISWDEIPAQEQMGCILHYRIYWKERDSDSQPQLCEIPYRVSPKSHPINSLQPRVTYVLWMTALTAAGESPQGNEREFCLQGKANWSTFVAPSICIAVITVGVFSMRCFRQKVFVLLLALRPQWCSREIPDPANSTWAKKYPIVEEKKQLSLDRLLADWPTPEEPEPLVINEVLPQVTPVFRRPHHPNWPGKGQRLQGRHASEEDTGSSASSPPPPRALTAETGPAVDLYKVLGSRRPDSKPGNPVSHLTVLPVDYLPTHEGYLPSNMDYLPSHEAPITDSLEELPQHISLSVFPSNSLHPLTFSCGEKLALDQLKMGCGSLML.

Positions 1–23 are cleaved as a signal peptide; that stretch reads MARTVCGCSWALIFIIMSLLVKA. The Extracellular segment spans residues 24–622; sequence KIDVCKRGDV…REFCLQGKAN (599 aa). Residues Asn48, Asn129, Asn166, and Asn271 are each glycosylated (N-linked (GlcNAc...) asparagine). Fibronectin type-III domains are found at residues 126 to 224, 226 to 317, 318 to 415, 423 to 520, and 521 to 620; these read QPQN…VVRP, PPWD…TQTP, EKEP…NIAD, APQQ…KHKA, and PLSG…LQGK. The WSXWS motif signature appears at 305–309; it reads WSDWS. N-linked (GlcNAc...) asparagine glycans are attached at residues Asn347, Asn376, and Asn480. The chain crosses the membrane as a helical span at residues 623–643; sequence WSTFVAPSICIAVITVGVFSM. The Cytoplasmic segment spans residues 644-861; the sequence is RCFRQKVFVL…LKMGCGSLML (218 aa). A Box 1 motif motif is present at residues 662 to 670; it reads CSREIPDPA. The segment at 718-761 is disordered; that stretch reads FRRPHHPNWPGKGQRLQGRHASEEDTGSSASSPPPPRALTAETG. Phosphotyrosine is present on Tyr800.

Belongs to the type I cytokine receptor family. Type 2 subfamily. Heterodimer/heterooligomer; disulfide-linked. The functional high affinity IL12 receptor is composed of I12RB1 and IL12RB2. Il12RB2 binds JAK2 (via its N-terminal) through a membrane-proximal region of the cytoplasmic domain. In terms of processing, on IL12 stimulation, phosphorylated on C-terminal tyrosine residues.

Its subcellular location is the membrane. Receptor for interleukin-12. This subunit is the signaling component coupling to the JAK2/STAT4 pathway. In Sus scrofa (Pig), this protein is Interleukin-12 receptor subunit beta-2 (IL12RB2).